The following is a 245-amino-acid chain: 1-(5-phosphoribosyl)-5-[(5-phosphoribosylamino)methylideneamino] imidazole-4-carboxamide isomerase (245 aa).

Asp7 functions as the Proton acceptor in the catalytic mechanism. Asp129 functions as the Proton donor in the catalytic mechanism.

The protein belongs to the HisA/HisF family.

Its subcellular location is the cytoplasm. The enzyme catalyses 1-(5-phospho-beta-D-ribosyl)-5-[(5-phospho-beta-D-ribosylamino)methylideneamino]imidazole-4-carboxamide = 5-[(5-phospho-1-deoxy-D-ribulos-1-ylimino)methylamino]-1-(5-phospho-beta-D-ribosyl)imidazole-4-carboxamide. It participates in amino-acid biosynthesis; L-histidine biosynthesis; L-histidine from 5-phospho-alpha-D-ribose 1-diphosphate: step 4/9. In Idiomarina loihiensis (strain ATCC BAA-735 / DSM 15497 / L2-TR), this protein is 1-(5-phosphoribosyl)-5-[(5-phosphoribosylamino)methylideneamino] imidazole-4-carboxamide isomerase.